A 432-amino-acid chain; its full sequence is Anaerobic glycerol-3-phosphate dehydrogenase subunit B (432 aa).

Belongs to the anaerobic G-3-P dehydrogenase subunit B family. In terms of assembly, composed of a catalytic GlpA/B dimer and of membrane bound GlpC. It depends on FMN as a cofactor.

The catalysed reaction is a quinone + sn-glycerol 3-phosphate = dihydroxyacetone phosphate + a quinol. It functions in the pathway polyol metabolism; glycerol degradation via glycerol kinase pathway; glycerone phosphate from sn-glycerol 3-phosphate (anaerobic route): step 1/1. Its function is as follows. Conversion of glycerol 3-phosphate to dihydroxyacetone. Uses fumarate or nitrate as electron acceptor. The protein is Anaerobic glycerol-3-phosphate dehydrogenase subunit B (glpB) of Haemophilus influenzae (strain ATCC 51907 / DSM 11121 / KW20 / Rd).